Here is a 349-residue protein sequence, read N- to C-terminus: MNREELFDVTVIGGGPAGLYSAFYSGLREMKTKIIEFQPQLGGKIHVYPEKMIWDIGGLLPVTGEKLIEQLVQQGLTFQPEVVLNTKIESIIRNKDGIFTLKTSTGEEHFSKTVIVATGSGILNPQKLSIEGAERFEVSNLNYTVKSLKRFKNKTVIISGGGNSAIDWANELEPIAKKVYLTYRKEELSGHEAQVKQLMNSSAECFFNTSITTLIAGDNHEAIEYVELTNHETGEVSQLAIDEVIINHGYERDITLLENSELDVAIIDNYYIAGNANSESSVDGLYAAGDILKHEGKLHLIAGAFQDAGNAVNKAKQFIQPDASEYGMVSSHNEVFKKRNRELIKQMMK.

FAD is bound by residues E36, K44, Y48, I88, L123, D290, and S331.

It belongs to the ferredoxin--NADP reductase type 2 family. In terms of assembly, homodimer. It depends on FAD as a cofactor.

The catalysed reaction is 2 reduced [2Fe-2S]-[ferredoxin] + NADP(+) + H(+) = 2 oxidized [2Fe-2S]-[ferredoxin] + NADPH. The polypeptide is Ferredoxin--NADP reductase 1 (Bacillus thuringiensis (strain Al Hakam)).